Consider the following 239-residue polypeptide: NAD(P)H-quinone oxidoreductase subunit K, chloroplastic (239 aa).

[4Fe-4S] cluster is bound by residues Cys-43, Cys-44, Cys-108, and Cys-139. Positions 217 to 239 (KSSVSSRELGNESGKEDVSIQNK) are disordered. Basic and acidic residues predominate over residues 225–239 (LGNESGKEDVSIQNK).

This sequence belongs to the complex I 20 kDa subunit family. NDH is composed of at least 16 different subunits, 5 of which are encoded in the nucleus. It depends on [4Fe-4S] cluster as a cofactor.

The protein resides in the plastid. It is found in the chloroplast thylakoid membrane. It carries out the reaction a plastoquinone + NADH + (n+1) H(+)(in) = a plastoquinol + NAD(+) + n H(+)(out). The catalysed reaction is a plastoquinone + NADPH + (n+1) H(+)(in) = a plastoquinol + NADP(+) + n H(+)(out). In terms of biological role, NDH shuttles electrons from NAD(P)H:plastoquinone, via FMN and iron-sulfur (Fe-S) centers, to quinones in the photosynthetic chain and possibly in a chloroplast respiratory chain. The immediate electron acceptor for the enzyme in this species is believed to be plastoquinone. Couples the redox reaction to proton translocation, and thus conserves the redox energy in a proton gradient. In Acorus calamus var. americanus (American sweet flag), this protein is NAD(P)H-quinone oxidoreductase subunit K, chloroplastic.